The following is a 268-amino-acid chain: Phosphoethanolamine/phosphocholine phosphatase (268 aa).

The active-site Nucleophile is the Asp32. Mg(2+)-binding residues include Asp32 and Asp34. The active-site Proton donor is the Asp34. Substrate is bound by residues Asp43 and Asp123. Asp203 contacts Mg(2+).

The protein belongs to the HAD-like hydrolase superfamily. PHOSPHO family. Requires Mg(2+) as cofactor. In terms of tissue distribution, expressed at sites of mineralization in bone and cartilage. Highly expressed in hypertrophic chondrocytes compared to non-chondrogenic tissues. Expressed in chondrocytes but not in heart, liver, lung, kidney, spleen, muscle, adipose tissues not duodenum. In diaphyseal cortical bone, it is expressed in the osteoid layer of the periosteum, forming surfaces of growing osteons, and newly formed osteocytes, whereas it is not expressed in the endosteum and closed osteons. In growth plate cartilage, it is limited to the early hypertrophic chondrocytes and the ossification groove of Ranvier. Highly expressed on the mineralization surfaces of the cartilage remnants and trabecular bone within the primary spongiosa. Expressed in 17-day-old embryonic calvaria, the osteoid present on the intramembranous and periosteal bone surfaces but not in soft tissues examined.

It is found in the extracellular vesicle. It catalyses the reaction phosphoethanolamine + H2O = ethanolamine + phosphate. The enzyme catalyses phosphocholine + H2O = choline + phosphate. In terms of biological role, phosphatase that has a high activity toward phosphoethanolamine (PEA) and phosphocholine (PCho). Involved in the generation of inorganic phosphate for bone mineralization. The chain is Phosphoethanolamine/phosphocholine phosphatase (PHOSPHO1) from Gallus gallus (Chicken).